We begin with the raw amino-acid sequence, 228 residues long: MGQKVHPIGIRLGIVKEHTSVWYADGRTYADYLLADLNVREYLQDKLKSASVSRIDIHRPAQTARITIHTARPGIVIGKKGEDVEKLRQDLTKQMGVPVHINIEEIRKPELDGMLVAQSVAQQLERRVMFRRAMKRAVQNAMRIGAKGIKIQVSGRLGGAEIARTEWYREGRVPLHTLRADIDYATYEAHTTYGVIGVKVWIFKGEVIGGRQEELKPQAPAPRKKAAK.

The region spanning Val-39 to Arg-107 is the KH type-2 domain.

This sequence belongs to the universal ribosomal protein uS3 family. As to quaternary structure, part of the 30S ribosomal subunit. Forms a tight complex with proteins S10 and S14.

Binds the lower part of the 30S subunit head. Binds mRNA in the 70S ribosome, positioning it for translation. This is Small ribosomal subunit protein uS3 from Pseudomonas fluorescens (strain ATCC BAA-477 / NRRL B-23932 / Pf-5).